An 83-amino-acid chain; its full sequence is Host transcription reprogramming factor 9 (83 aa).

An N-terminal signal peptide occupies residues 1–19 (MQFSKITLAIVLYALGTAA). A C2H2-type zinc finger spans residues 54-77 (YRCDKCEKEFVKGNDFFNHGGRGH).

The protein localises to the secreted. It is found in the host nucleus. Functionally, probable secreted effector that translocates into the nuclei of host cells to reprogram the expression of targeted genes by binding on effector binding elements in rice. The protein is Host transcription reprogramming factor 9 of Pyricularia oryzae (strain 70-15 / ATCC MYA-4617 / FGSC 8958) (Rice blast fungus).